Here is a 526-residue protein sequence, read N- to C-terminus: Threonine synthase 1, chloroplastic (526 aa).

The N-terminal 40 residues, 1–40 (MASSCLFNASVSSLNPKQDPIRRHRSTSLLRHRPVVISCT), are a transit peptide targeting the chloroplast. S-adenosyl-L-methionine-binding positions include 142–144 (PYG), 165–167 (SAF), asparagine 172, leucine 173, lysine 181, and asparagine 187. Lysine 203 is subject to N6-(pyridoxal phosphate)lysine. Residues 335–339 (GNLGN) and threonine 472 contribute to the pyridoxal 5'-phosphate site.

It belongs to the threonine synthase family. Homodimer. Pyridoxal 5'-phosphate is required as a cofactor.

The protein resides in the plastid. It localises to the chloroplast. It carries out the reaction O-phospho-L-homoserine + H2O = L-threonine + phosphate. It participates in amino-acid biosynthesis; L-threonine biosynthesis; L-threonine from L-aspartate: step 5/5. Allosterically activated by S-adenosyl-L-methionine (SAM). Activated by S-adenosyl-L-ethionine, 5'-amino-5'-deoxyadenosine, sinefungin and 5'-deoxy-5-methylthioadenosine. Inhibited by AMP. Functionally, catalyzes the gamma-elimination of phosphate from L-phosphohomoserine and the beta-addition of water to produce L-threonine. The chain is Threonine synthase 1, chloroplastic (TS1) from Arabidopsis thaliana (Mouse-ear cress).